We begin with the raw amino-acid sequence, 668 residues long: Biotin biosynthesis bifunctional protein BioWF (668 aa).

Arg293 serves as a coordination point for substrate. 380–381 is a pyridoxal 5'-phosphate binding site; the sequence is GY. Position 405 (His405) interacts with substrate. Pyridoxal 5'-phosphate is bound by residues Ser451, 476–479, and 507–510; these read DDAH and TASK. Residue Lys510 is modified to N6-(pyridoxal phosphate)lysine.

This sequence in the N-terminal section; belongs to the BioW family. In the C-terminal section; belongs to the class-II pyridoxal-phosphate-dependent aminotransferase family. BioF subfamily. As to quaternary structure, homodimer. It depends on Mg(2+) as a cofactor. The cofactor is pyridoxal 5'-phosphate.

The enzyme catalyses heptanedioate + ATP + CoA = 6-carboxyhexanoyl-CoA + AMP + diphosphate. It catalyses the reaction 6-carboxyhexanoyl-[ACP] + L-alanine + H(+) = (8S)-8-amino-7-oxononanoate + holo-[ACP] + CO2. It functions in the pathway metabolic intermediate metabolism; pimeloyl-CoA biosynthesis; pimeloyl-CoA from pimelate: step 1/1. Its pathway is cofactor biosynthesis; biotin biosynthesis. In terms of biological role, catalyzes both the decarboxylative condensation of pimeloyl-[acyl-carrier protein] and L-alanine to produce 8-amino-7-oxononanoate (AON), [acyl-carrier protein], and carbon dioxide, and the transformation of pimelate into pimeloyl-CoA with concomitant hydrolysis of ATP to AMP. The protein is Biotin biosynthesis bifunctional protein BioWF of Cutibacterium acnes (strain SK137) (Propionibacterium acnes).